The primary structure comprises 204 residues: High frequency lysogenization protein HflD homolog (204 aa).

The protein belongs to the HflD family.

The protein resides in the cytoplasm. The protein localises to the cell inner membrane. This chain is High frequency lysogenization protein HflD homolog, found in Shewanella woodyi (strain ATCC 51908 / MS32).